We begin with the raw amino-acid sequence, 260 residues long: Indole-3-glycerol phosphate synthase (260 aa).

Belongs to the TrpC family.

It carries out the reaction 1-(2-carboxyphenylamino)-1-deoxy-D-ribulose 5-phosphate + H(+) = (1S,2R)-1-C-(indol-3-yl)glycerol 3-phosphate + CO2 + H2O. It participates in amino-acid biosynthesis; L-tryptophan biosynthesis; L-tryptophan from chorismate: step 4/5. The protein is Indole-3-glycerol phosphate synthase of Chloroherpeton thalassium (strain ATCC 35110 / GB-78).